Here is a 359-residue protein sequence, read N- to C-terminus: MARITLRQLLDHAAERSYGVPAFNINNMEQGLAIMEAARASDAPVILQVSRGARSYANDVMLAKMMEALEEMYPDIPLCIHQDHGNNVATCLTAIQHGFTSVMMDGSLKEDAKTPADYDYNVSITAEVSRLAHMVGASVEGELGCLGSLETGHGEAEDGHGFEGALDRSQLLTDPDEAARFVAETGVDALAVAIGTSHGAYKFTRKPTGEVLAMDVIEKIHERLPDTHIVMHGSSSVPQEWQDVFNAHGGQMRETYGVPVEEIVRGIRFGVRKVNIDTDLRLAAAAAFRRVADTSRSEFDPRKFLKPAMDAMSAVCKARFEAFGTAGNASRIKVVPMPEMARRYASGSLKPQSARSEAA.

Serine 50 provides a ligand contact to D-glyceraldehyde 3-phosphate. Catalysis depends on aspartate 83, which acts as the Proton donor. The Zn(2+) site is built by histidine 84, aspartate 105, glutamate 142, and histidine 198. Residue glycine 199 participates in dihydroxyacetone phosphate binding. Histidine 232 provides a ligand contact to Zn(2+). Dihydroxyacetone phosphate-binding positions include 233–235 (GSS) and 275–278 (NIDT).

It belongs to the class II fructose-bisphosphate aldolase family. Homodimer. Zn(2+) is required as a cofactor.

The catalysed reaction is beta-D-fructose 1,6-bisphosphate = D-glyceraldehyde 3-phosphate + dihydroxyacetone phosphate. Its pathway is carbohydrate biosynthesis; Calvin cycle. It participates in carbohydrate degradation; glycolysis; D-glyceraldehyde 3-phosphate and glycerone phosphate from D-glucose: step 4/4. Its function is as follows. Catalyzes the aldol condensation of dihydroxyacetone phosphate (DHAP or glycerone-phosphate) with glyceraldehyde 3-phosphate (G3P) to form fructose 1,6-bisphosphate (FBP) in gluconeogenesis and the reverse reaction in glycolysis. This chain is Fructose-bisphosphate aldolase (cbbA), found in Rhizobium meliloti (strain 1021) (Ensifer meliloti).